The sequence spans 279 residues: Large ribosomal subunit protein uL2 (279 aa).

The disordered stretch occupies residues 222–264 (GVAMNPVDHPHGGGEGRTSGGRNPVTPAGKPTKGAKTRVNKAT).

This sequence belongs to the universal ribosomal protein uL2 family. Part of the 50S ribosomal subunit. Forms a bridge to the 30S subunit in the 70S ribosome.

In terms of biological role, one of the primary rRNA binding proteins. Required for association of the 30S and 50S subunits to form the 70S ribosome, for tRNA binding and peptide bond formation. It has been suggested to have peptidyltransferase activity; this is somewhat controversial. Makes several contacts with the 16S rRNA in the 70S ribosome. The sequence is that of Large ribosomal subunit protein uL2 from Caulobacter sp. (strain K31).